Reading from the N-terminus, the 393-residue chain is MTNSNRIKLTWISFLSYALTGALVIVTGMVMGNIADYFHLPVSSMSNTFTFLNAGILISIFLNAWLMEIVPLKTQLRFGFILMVLAVAGLMFSHSLALFSAAMFVLGLVSGITMSIGTFLITQLYEGRQRGSRLLFTDSFFSMAGMIFPMVAAFLLARSIEWYWVYACIGLVYLAIFILTFGCEFPALGKHAQHSQAPVVKEKWGIGVLFLAVAALCYILGQLGFISWVPEYAKGLGMSLNDAGALVSDFWMSYMFGMWAFSFILRFFDLQRILTVLAGMAAVLMYLFITGTQAHMPWFILTLGFFSSAIYTSIITLGSQQTKVASPKLVNFILTCGTIGTMLTFVVTGPIVAHSGPQAALLTANGLYAVVFVMCFALGFVSRHRQHSAPATH.

A run of 12 helical transmembrane segments spans residues 11–31 (WISF…GMVM), 51–71 (FLNA…EIVP), 78–98 (FGFI…SLAL), 101–121 (AAMF…TFLI), 134–154 (LLFT…VAAF), 162–182 (WYWV…LTFG), 206–226 (IGVL…LGFI), 245–265 (ALVS…SFIL), 273–293 (ILTV…TGTQ), 298–318 (WFIL…ITLG), 332–352 (FILT…GPIV), and 361–381 (LLTA…LGFV).

Belongs to the major facilitator superfamily. TsgA family.

The protein localises to the cell inner membrane. The protein is Protein TsgA of Salmonella heidelberg (strain SL476).